Consider the following 243-residue polypeptide: tRNA pseudouridine synthase A (243 aa).

Catalysis depends on Asp53, which acts as the Nucleophile. Position 111 (Tyr111) interacts with substrate.

Belongs to the tRNA pseudouridine synthase TruA family. In terms of assembly, homodimer.

It catalyses the reaction uridine(38/39/40) in tRNA = pseudouridine(38/39/40) in tRNA. Functionally, formation of pseudouridine at positions 38, 39 and 40 in the anticodon stem and loop of transfer RNAs. This is tRNA pseudouridine synthase A from Chlorobium phaeovibrioides (strain DSM 265 / 1930) (Prosthecochloris vibrioformis (strain DSM 265)).